A 764-amino-acid chain; its full sequence is Putative wall-associated receptor kinase-like 13 (764 aa).

The first 26 residues, 1-26 (MRGNKNYYFLSLLYFLSLPILHFSSC), serve as a signal peptide directing secretion. At 27–379 (THKCGDIQIP…HRCIDYHIPE (353 aa)) the chain is on the extracellular side. Residues asparagine 78, asparagine 114, asparagine 121, asparagine 164, asparagine 233, asparagine 238, asparagine 259, and asparagine 283 are each glycosylated (N-linked (GlcNAc...) asparagine). The segment at 308–372 (CTCDNHIASG…CINTSGGHRC (65 aa)) is atypical EGF-like. 3 disulfide bridges follow: cysteine 310/cysteine 323, cysteine 345/cysteine 363, and cysteine 352/cysteine 372. An N-linked (GlcNAc...) asparagine glycan is attached at asparagine 365. The helical transmembrane segment at 380–400 (VMLGLGAGFFVLIVGGGIWWW) threads the bilayer. The Cytoplasmic segment spans residues 401–764 (RKLLRKRRMT…SGSTEIARSM (364 aa)). The Protein kinase domain maps to 454–728 (FNDNRVIGQG…REVSTALERI (275 aa)). Residues 460-468 (IGQGGQGTV) and lysine 482 each bind ATP. Residue tyrosine 527 is modified to Phosphotyrosine. The active-site Proton acceptor is the aspartate 579. Phosphothreonine occurs at positions 613 and 618. A Phosphotyrosine modification is found at tyrosine 626.

This sequence belongs to the protein kinase superfamily. Ser/Thr protein kinase family.

It is found in the membrane. It catalyses the reaction L-seryl-[protein] + ATP = O-phospho-L-seryl-[protein] + ADP + H(+). It carries out the reaction L-threonyl-[protein] + ATP = O-phospho-L-threonyl-[protein] + ADP + H(+). Putative serine/threonine-protein kinase that may function as a signaling receptor of extracellular matrix component. The chain is Putative wall-associated receptor kinase-like 13 (WAKL13) from Arabidopsis thaliana (Mouse-ear cress).